The sequence spans 420 residues: Histidine--tRNA ligase (420 aa).

The protein belongs to the class-II aminoacyl-tRNA synthetase family. Homodimer.

The protein localises to the cytoplasm. The catalysed reaction is tRNA(His) + L-histidine + ATP = L-histidyl-tRNA(His) + AMP + diphosphate + H(+). The chain is Histidine--tRNA ligase from Staphylococcus saprophyticus subsp. saprophyticus (strain ATCC 15305 / DSM 20229 / NCIMB 8711 / NCTC 7292 / S-41).